Consider the following 130-residue polypeptide: Protein ApaG (130 aa).

An ApaG domain is found at 3–127; that stretch reads KAETRGIMVT…FSLDSPHLRR (125 aa).

This is Protein ApaG from Methylorubrum extorquens (strain CM4 / NCIMB 13688) (Methylobacterium extorquens).